The primary structure comprises 356 residues: tRNA-specific 2-thiouridylase MnmA 1 (356 aa).

ATP-binding positions include 8 to 15 (GMSGGVDS) and M34. The active-site Nucleophile is C103. An intrachain disulfide couples C103 to C199. G127 provides a ligand contact to ATP. An interaction with tRNA region spans residues 149 to 151 (KDQ). The active-site Cysteine persulfide intermediate is the C199. An interaction with tRNA region spans residues 305-306 (RY).

It belongs to the MnmA/TRMU family.

The protein resides in the cytoplasm. The enzyme catalyses S-sulfanyl-L-cysteinyl-[protein] + uridine(34) in tRNA + AH2 + ATP = 2-thiouridine(34) in tRNA + L-cysteinyl-[protein] + A + AMP + diphosphate + H(+). Functionally, catalyzes the 2-thiolation of uridine at the wobble position (U34) of tRNA, leading to the formation of s(2)U34. The protein is tRNA-specific 2-thiouridylase MnmA 1 of Clostridium botulinum (strain Langeland / NCTC 10281 / Type F).